The following is a 414-amino-acid chain: CinA-like protein (414 aa).

It belongs to the CinA family.

This chain is CinA-like protein, found in Citrifermentans bemidjiense (strain ATCC BAA-1014 / DSM 16622 / JCM 12645 / Bem) (Geobacter bemidjiensis).